The sequence spans 333 residues: (2R)-3-sulfolactate dehydrogenase (NADP(+)) (333 aa).

This sequence belongs to the LDH2/MDH2 oxidoreductase family.

The enzyme catalyses (2R)-3-sulfolactate + NADP(+) = 3-sulfopyruvate + NADPH + H(+). In terms of biological role, catalyzes the reduction of sulfopyruvate to (R)-sulfolactate. Together with SlcC, provides a racemase system that converts (2S)-3-sulfolactate to (2R)-3-sulfolactate, which is degraded further by (2R)-sulfolactate sulfo-lyase. The sequence is that of (2R)-3-sulfolactate dehydrogenase (NADP(+)) (comC) from Chromohalobacter salexigens (strain ATCC BAA-138 / DSM 3043 / CIP 106854 / NCIMB 13768 / 1H11).